The sequence spans 339 residues: Heat-inducible transcription repressor HrcA (339 aa).

It belongs to the HrcA family.

In terms of biological role, negative regulator of class I heat shock genes (grpE-dnaK-dnaJ and groELS operons). Prevents heat-shock induction of these operons. The chain is Heat-inducible transcription repressor HrcA from Thiobacillus denitrificans (strain ATCC 25259 / T1).